Reading from the N-terminus, the 338-residue chain is Solute carrier family 35 member G5 (338 aa).

The tract at residues 1–21 (MAGSHPYFNLPDSTHPSPPSA) is disordered. The next 9 membrane-spanning stretches (helical) occupy residues 37 to 57 (TNGLLVALLGGGLPAGFVGPL), 67 to 87 (LPSLELLICRCLFHLPIALPL), 105 to 125 (CFCALLNVLSIGCAYSAVQVV), 160 to 180 (CGLLGSILGLIIIVGPGLWTL), 190 to 210 (ALGYVQAFLGGLALSLGLLVY), 221 to 241 (TVAFLFGLVGLLGFVPGLFVL), 250 to 270 (LLSWSCVGAVGILALVSFTCV), 281 to 301 (LVCAVLHSEVVVALILQYYVL), and 305 to 325 (VAPFDITGAGIVLGSIAIITA). The 126-residue stretch at 49–174 (LPAGFVGPLS…SILGLIIIVG (126 aa)) folds into the EamA 1 domain. The 54-residue stretch at 272–325 (YAVTKAHPALVCAVLHSEVVVALILQYYVLHETVAPFDITGAGIVLGSIAIITA) folds into the EamA 2 domain.

Belongs to the SLC35G solute transporter family.

It localises to the membrane. The chain is Solute carrier family 35 member G5 (SLC35G5) from Pan paniscus (Pygmy chimpanzee).